A 454-amino-acid chain; its full sequence is MARPNKFLLWFCCFAWLCFPISLGSQASGGEAQIAASAELESGAMPWSLLQHIDERDRAGLLPALFKVLSVGRGGSPRLQPDSRALHYMKKLYKTYATKEGIPKSNRSHLYNTVRLFTPCTRHKQAPGDQVTGILPSVELLFNLDRITTVEHLLKSVLLYNINNSVSFSSAVKCVCNLMIKEPKSSSRTLGRAPYSFTFNSQFEFGKKHKWIQIDVTSLLQPLVASNKRSIHMSINFTCMKDQLEHPSAQNGLFNMTLVSPSLILYLNDTSAQAYHSWYSLHYKRRPSQGPDQERSLSAYPVGEEAAEDGRSSHHRHRRGQETVSSELKKPLGPASFNLSEYFRQFLLPQNECELHDFRLSFSQLKWDNWIVAPHRYNPRYCKGDCPRAVGHRYGSPVHTMVQNIIYEKLDSSVPRPSCVPAKYSPLSVLTIEPDGSIAYKEYEDMIATKCTCR.

The N-terminal stretch at 1-24 (MARPNKFLLWFCCFAWLCFPISLG) is a signal peptide. A propeptide spanning residues 25-319 (SQASGGEAQI…GRSSHHRHRR (295 aa)) is cleaved from the precursor. N-linked (GlcNAc...) asparagine glycosylation is found at asparagine 106, asparagine 163, asparagine 236, asparagine 255, and asparagine 268. The tract at residues 303–330 (GEEAAEDGRSSHHRHRRGQETVSSELKK) is disordered. Serine 325 is subject to Phosphoserine; by CK. N-linked (GlcNAc...) asparagine glycosylation is present at asparagine 338. Intrachain disulfides connect cysteine 353–cysteine 419, cysteine 382–cysteine 451, and cysteine 386–cysteine 453.

Belongs to the TGF-beta family. In terms of assembly, homodimer or heterodimer (Potential). But, in contrast to other members of this family, cannot be disulfide-linked. Phosphorylated; phosphorylation is critical for GDF9 function. In vitro, can be phosphorylated by CK at Ser-325. As to expression, expressed in ovarian granulosa cells. Present in oocytes of primary follicles (at protein level).

The protein localises to the secreted. Functionally, required for ovarian folliculogenesis. Promotes primordial follicle development. Stimulates granulosa cell proliferation. Promotes cell transition from G0/G1 to S and G2/M phases, through an increase of CCND1 and CCNE1 expression, and RB1 phosphorylation. It regulates STAR expression and cAMP-dependent progesterone release in granulosa and thecal cells. Attenuates the suppressive effects of activin A on STAR expression and progesterone production by increasing the expression of inhibin B. It suppresses FST and FSTL3 production in granulosa-lutein cells. In Homo sapiens (Human), this protein is Growth/differentiation factor 9 (GDF9).